We begin with the raw amino-acid sequence, 561 residues long: Potassium-transporting ATPase potassium-binding subunit (561 aa).

A run of 10 helical transmembrane segments spans residues 4 to 24 (IVMQDVFFVVLLLVLAVPLGI), 65 to 85 (AVSVLAFSAVGFVFVMAVLML), 133 to 153 (IGLTVQNFVSAATGIAVLFAV), 177 to 197 (LYILLPLSLILALLLVSQGVV), 253 to 273 (FTNLIEMLAILLIPVALVVMF), 285 to 305 (AIMTAMMIVFVIGVVAITISE), 380 to 400 (GLYGMIGFIILTVFIAGLLVG), 417 to 437 (MVCLLILVPPLLTLFGTAVAV), 484 to 504 (MVGAVMMLLARFIPLVAALYL), and 528 to 548 (FIGLLIGVVVLVGALSFLPAL).

It belongs to the KdpA family. The system is composed of three essential subunits: KdpA, KdpB and KdpC.

Its subcellular location is the cell membrane. Functionally, part of the high-affinity ATP-driven potassium transport (or Kdp) system, which catalyzes the hydrolysis of ATP coupled with the electrogenic transport of potassium into the cytoplasm. This subunit binds the extracellular potassium ions and delivers the ions to the membrane domain of KdpB through an intramembrane tunnel. The protein is Potassium-transporting ATPase potassium-binding subunit of Listeria monocytogenes serovar 1/2a (strain ATCC BAA-679 / EGD-e).